A 948-amino-acid polypeptide reads, in one-letter code: ATPase 2, plasma membrane-type (948 aa).

S2 is subject to N-acetylserine. Residues 2-61 (SSLEDIKNETVDLEKIPIEEVFQQLKCSREGLTTQEGEDRIQIFGPNKLEEKKESKLLKF) lie on the Cytoplasmic side of the membrane. A helical membrane pass occupies residues 62–81 (LGFMWNPLSWVMEMAAIMAI). The Extracellular segment spans residues 82–93 (ALANGDGRPPDW). Residues 94–114 (QDFVGIICLLVINSTISFIEE) traverse the membrane as a helical segment. At 115–243 (NNAGNAAAAL…GHFQKVLTAI (129 aa)) the chain is on the cytoplasmic side. The helical transmembrane segment at 244–264 (GNFCICSIAIGMVIEIIVMYP) threads the bilayer. At 265–273 (IQRRKYRDG) the chain is on the extracellular side. Residues 274 to 291 (IDNLLVLLIGGIPIAMPT) traverse the membrane as a helical segment. Residues 292–643 (VLSVTMAIGS…TSRAIFQRMK (352 aa)) are Cytoplasmic-facing. D329 acts as the 4-aspartylphosphate intermediate in catalysis. Residues D588 and D592 each coordinate Mg(2+). A helical transmembrane segment spans residues 644–665 (NYTIYAVSITIRIVFGFMLIAL). Residues 666-670 (IWEFD) lie on the Extracellular side of the membrane. Residues 671–693 (FSAFMVLIIAILNDGTIMTISKD) traverse the membrane as a helical segment. At 694–709 (RVKPSPTPDSWKLKEI) the chain is on the cytoplasmic side. The helical transmembrane segment at 710 to 730 (FATGVVLGGYQAIMTVIFFWA) threads the bilayer. The Extracellular portion of the chain corresponds to 731 to 751 (AHKTDFFSDTFGVRSIRDNNH). Residues 752–772 (ELMGAVYLQVSIISQALIFVT) form a helical membrane-spanning segment. At 773–784 (RSRSWSFVERPG) the chain is on the cytoplasmic side. A helical membrane pass occupies residues 785-805 (ALLMIAFLIAQLIATLIAVYA). Residues 806-813 (NWEFAKIR) lie on the Extracellular side of the membrane. Residues 814 to 834 (GIGWGWAGVIWLYSIVTYFPL) form a helical membrane-spanning segment. Residues 835–948 (DVFKFAIRYI…DIETPSHYTV (114 aa)) are Cytoplasmic-facing. A Phosphothreonine modification is found at T881. S899 carries the post-translational modification Phosphoserine. The residue at position 931 (S931) is a Phosphoserine; by CIPK11. The interval 946-948 (YTV) is interaction with 14-3-3 proteins. T947 is modified (phosphothreonine).

This sequence belongs to the cation transport ATPase (P-type) (TC 3.A.3) family. Type IIIA subfamily. Binds to 14-3-3 proteins. The binding is induced by phosphorylation of Thr-947 and it activates the H(+)-ATPase. Interacts (via the R-domain) with PSY1R (via C-terminus). Part of a functional complex containing PSKR1, BAK1, CNGC17, and AHA. Interacts with CNGC17 and PSKR1. Interacts with PP2C67/PP2C-D1 at the plasma membrane. Interacts with AHA1. In terms of processing, phosphorylated, probably by PHOT1 and PHOT2, at C-terminal Thr-947 in guard cells in response to blue light to induce stomatal opening. Post-translationally, phosphorylation at Thr-881 by PSY1R. This phosphorylation activates proton pumping. Decreased phosphorylation in response to flg22 elicitation. Phosphorylation at Ser-899 is specifically induced by RALF1, thus leading to the inhibition of proton transport. Increased phosphorylation in response to flg22 elicitation. In terms of processing, phosphorylation of Thr-947 induces the binding to 14-3-3 proteins, but phosphorylation of Ser-931 interferes with this binding no matter whether Thr-947 is phosphorylated or not. Decreased phosphorylation in response to flg22 elicitation. Phosphorylation of Thr-947 is enhanced by the presence of brassinolide (BL) via the BRI1-BIN2 pathway and prior the trigger of hypocotyl elongation. Inactivated by PP2C67/PP2C-D1-mediated Thr-947 dephosphorylation; SAUR19 inhibits the action of PP2C67/PP2C-D1 and thus promotes the active phosphorylated form. Post-translationally, abscisic acid induces dephosphorylation of AHA2 in etiolated seedlings, suppressing ATP hydrolysis and hypocotyl elongation. As to expression, higher levels in roots than in shoots. Expressed in epidermal and root cortex cells, in phloem, xylem and root hairs. Detected in cotyledons, leaves, hypocotyls, roots and root hairs. Expressed in guard cells and mesophyll cells.

The protein resides in the cell membrane. The enzyme catalyses ATP + H2O + H(+)(in) = ADP + phosphate + 2 H(+)(out). Regulated by an auto-inhibitory C-terminal domain that can be displaced by phosphorylation of Thr-947 and the subsequent binding of 14-3-3 proteins. Negatively regulated by PKS5. PKS5 phosphorylates Ser-931, inhibiting interaction with the activating 14-3-3 protein. Positively regulated by PSY1R. PSY1R phosphorylates Thr-881, situated in the auto-inhibitory region I of the C-terminal domain, causing pump activation. Negatively regulated by the secreted peptide RALF. After specific binding to FERONIA, RALF causes phosphorylation at Ser-899, mediating the inhibition of proton transport. Activated by lysophospholipids, without the involvement of phosphorylation of Thr-947. This activation is critically dependent on the single autoinhibitory residue Leu-919. Repressed by PP2C-D phosphatases (e.g. PP2C67/PP2C-D1 and PP2C64/PP2C-D5) which dephosphorylates Thr-947. Triggered by SAUR19 via phosphorylation of the C-terminal autoinhibitory domain (e.g. Thr-947), as a result of the inhibition of PP2C67/PP2C-D1. Phosphorylation on Thr residues is repressed by tyrphostin 9, sphingosine, GW5074 and BML-265. By contrast, the fungal phytotoxin fusicoccin (FC) promotes phosphorylation of Thr-947 independently to BHP, thus leading to large stomatal opening. The plasma membrane H(+) ATPase of plants and fungi generates a proton gradient that drives the active transport of nutrients by H(+)-symport. The resulting external acidification and/or internal alkinization may mediate growth responses. Involved in maintaining the membrane potential and delta-pH, together forming the plasma membrane protonmotive force (PMF) required for root and hypocotyl elongation and root tropism. Important for root growth and development during different nitrogen regimes. Forms a functional cation-translocating unit with CNGC17 that is activated by PSKR1/BAK1 and possibly other BAK1/RLK complexes. Promotes stomatal opening in response to blue light. In Arabidopsis thaliana (Mouse-ear cress), this protein is ATPase 2, plasma membrane-type.